A 645-amino-acid polypeptide reads, in one-letter code: Envelope glycoprotein (645 aa).

The signal sequence occupies residues 1-33 (MESPAFSKPLKDKINPWGPLIIMGILVRAGASV). A receptor-binding domain (RBD) region spans residues 32–237 (SVQRDSPHQV…QVLNVGPRVP (206 aa)). Over 34 to 585 (QRDSPHQVFN…FNRSPWFTTL (552 aa)) the chain is Extracellular. N-linked (GlcNAc...) asparagine; by host glycosylation is found at Asn43 and Asn58. 2 cysteine pairs are disulfide-bonded: Cys113–Cys130 and Cys122–Cys135. Positions 260–285 (RTPRPPPSGAASMVPGAPPPSQQPGT) are disordered. N-linked (GlcNAc...) asparagine; by host glycosylation is present at Asn301. 6 disulfides stabilise this stretch: Cys311–Cys314, Cys311–Cys538, Cys341–Cys395, Cys360–Cys372, Cys402–Cys415, and Cys530–Cys537. Residues 311-314 (CWLC) carry the CXXC motif. Residues Asn333 and Asn340 are each glycosylated (N-linked (GlcNAc...) asparagine; by host). N-linked (GlcNAc...) asparagine; by host glycans are attached at residues Asn373 and Asn409. The segment at 447-467 (VSLTLALLLGGLTMGGIAAGV) is fusion peptide. Positions 490 to 510 (DLGALEKSVSALEKSLTSLSE) form a coiled coil. The tract at residues 513–529 (LQNRRGLDLLFLKEGGL) is immunosuppression. Positions 530 to 538 (CAALKEECC) match the CX6CC motif. Residues 586 to 606 (ISTIMGPLIVLLLILLFGPCI) traverse the membrane as a helical segment. Cys605 is lipidated: S-palmitoyl cysteine; by host. The Cytoplasmic segment spans residues 607–640 (LNRLVQFVKDRISVVQALVLTQQYHQLKSIDPEE). Positions 630-633 (YHQL) match the YXXL motif; contains endocytosis signal motif.

As to quaternary structure, the mature envelope protein (Env) consists of a trimer of SU-TM heterodimers attached by a labile interchain disulfide bond. The activated Env consists of SU monomers and TM trimers. Post-translationally, specific enzymatic cleavages in vivo yield mature proteins. Envelope glycoproteins are synthesized as an inactive precursor that is N-glycosylated and processed likely by host cell furin or by a furin-like protease in the Golgi to yield the mature SU and TM proteins. The cleavage site between SU and TM requires the minimal sequence [KR]-X-[KR]-R. The R-peptide is released from the C-terminus of the cytoplasmic tail of the TM protein upon particle formation as a result of proteolytic cleavage by the viral protease. Cleavage of this peptide is required for TM to become fusogenic. In terms of processing, the CXXC motif is highly conserved across a broad range of retroviral envelope proteins. It is thought to participate in the formation of a labile disulfide bond possibly with the CX6CC motif present in the transmembrane protein. Isomerization of the intersubunit disulfide bond to an SU intrachain disulfide bond is thought to occur upon receptor recognition in order to allow membrane fusion. The transmembrane protein is palmitoylated. Post-translationally, the R-peptide is palmitoylated.

It is found in the virion membrane. The protein localises to the host cell membrane. Its function is as follows. The surface protein (SU) attaches the virus to the host cell by binding to its receptor. This interaction activates a thiol in a CXXC motif of the C-terminal domain, where the other Cys residue participates in the formation of the intersubunit disulfide. The activated thiol will attack the disulfide and cause its isomerization into a disulfide isomer within the motif. This leads to SU displacement and TM refolding, and is thought to activate its fusogenic potential by unmasking its fusion peptide. Fusion occurs at the host cell plasma membrane. Functionally, the transmembrane protein (TM) acts as a class I viral fusion protein. Under the current model, the protein has at least 3 conformational states: pre-fusion native state, pre-hairpin intermediate state, and post-fusion hairpin state. During viral and target cell membrane fusion, the coiled coil regions (heptad repeats) assume a trimer-of-hairpins structure, positioning the fusion peptide in close proximity to the C-terminal region of the ectodomain. The formation of this structure appears to drive apposition and subsequent fusion of viral and target cell membranes. Membranes fusion leads to delivery of the nucleocapsid into the cytoplasm. This Homo sapiens (Human) protein is Envelope glycoprotein (env).